The chain runs to 677 residues: WD and tetratricopeptide repeats protein 1 (677 aa).

5 WD repeats span residues 45–84 (GHSG…KLLS), 88–129 (GHTA…TIHM), 132–172 (DHTN…KHSE), 182–222 (GQLV…NHRK), and 265–305 (RLRV…RPYT). Ser353 bears the Phosphoserine mark. TPR repeat units lie at residues 362-395 (LERV…APHN) and 397-432 (MLYG…NPCH). Residues 487 to 509 (NDGEEKKGPGGGAPVRLRSTSRK) form a disordered region. At Ser511 the chain carries Phosphoserine. 2 WD repeats span residues 535–575 (NTTT…LVRV) and 578–617 (GDES…EDLT). The segment at 655 to 677 (SSGGAGASDDEDSSEGQVQCRPS) is disordered.

Its pathway is protein modification; protein ubiquitination. In terms of biological role, may function as a substrate receptor for CUL4-DDB1 E3 ubiquitin-protein ligase complex. The chain is WD and tetratricopeptide repeats protein 1 (WDTC1) from Homo sapiens (Human).